We begin with the raw amino-acid sequence, 694 residues long: Proprotein convertase subtilisin/kexin type 9 (694 aa).

A signal peptide spans 1–34 (MGTHCSAWLRWPLLPLLPPLLLLLLLLCPTGAGA). Residues 35 to 155 (QDEDGDYEEL…IEEDSFVFAQ (121 aa)) constitute a propeptide that is removed on maturation. At Tyr-41 the chain carries Sulfotyrosine. A Phosphoserine modification is found at Ser-50. In terms of domain architecture, Peptidase S8 spans 158–470 (PWNLERIIPA…RTVWSAHSGP (313 aa)). Catalysis depends on charge relay system residues Asp-189 and His-229. 2 disulfides stabilise this stretch: Cys-226–Cys-258 and Cys-326–Cys-361. Ser-389 (charge relay system) is an active-site residue. The tract at residues 453–694 (ETGGQLLCRT…RPSAKASWVQ (242 aa)) is C-terminal domain. Disulfide bonds link Cys-460-Cys-530, Cys-480-Cys-529, and Cys-489-Cys-512. A Cell attachment site motif is present at residues 499 to 501 (RGD). Residue Asn-536 is glycosylated (N-linked (GlcNAc...) asparagine). Disulfide bonds link Cys-537/Cys-604, Cys-555/Cys-603, Cys-565/Cys-591, Cys-611/Cys-682, Cys-629/Cys-681, and Cys-638/Cys-657. Ser-691 is subject to Phosphoserine.

Belongs to the peptidase S8 family. As to quaternary structure, monomer. Can self-associate to form dimers and higher multimers which may have increased LDLR degrading activity. The precursor protein but not the mature protein may form multimers. Interacts with APOB, VLDLR, LRP8/APOER2 and BACE1. The full-length immature form (pro-PCSK9) interacts with SCNN1A, SCNN1B and SCNN1G. The pro-PCSK9 form (via C-terminal domain) interacts with LDLR. Interacts (via the C-terminal domain) with ANXA2 (via repeat Annexin 1); the interaction inhibits the degradation of LDLR. Ca(2+) is required as a cofactor. In terms of processing, cleavage by furin and PCSK5 generates a truncated inactive protein that is unable to induce LDLR degradation. Undergoes autocatalytic cleavage in the endoplasmic reticulum to release the propeptide from the N-terminus and the cleavage of the propeptide is strictly required for its maturation and activation. The cleaved propeptide however remains associated with the catalytic domain through non-covalent interactions, preventing potential substrates from accessing its active site. As a result, it is secreted from cells as a propeptide-containing, enzymatically inactive protein. Post-translationally, phosphorylation protects the propeptide against proteolysis. Hepatocytes, kidney mesenchymal cells, intestinal ileum, colon epithelia and embryonic brain telencephalon neurons.

The protein resides in the cytoplasm. It is found in the secreted. The protein localises to the endosome. It localises to the lysosome. Its subcellular location is the cell surface. The protein resides in the endoplasmic reticulum. It is found in the golgi apparatus. With respect to regulation, its proteolytic activity is autoinhibited by the non-covalent binding of the propeptide to the catalytic domain. Inhibited by EGTA. Crucial player in the regulation of plasma cholesterol homeostasis. Binds to low-density lipid receptor family members: low density lipoprotein receptor (LDLR), very low density lipoprotein receptor (VLDLR), apolipoprotein E receptor (LRP1/APOER) and apolipoprotein receptor 2 (LRP8/APOER2), and promotes their degradation in intracellular acidic compartments. Acts via a non-proteolytic mechanism to enhance the degradation of the hepatic LDLR through a clathrin LDLRAP1/ARH-mediated pathway. May prevent the recycling of LDLR from endosomes to the cell surface or direct it to lysosomes for degradation. Can induce ubiquitination of LDLR leading to its subsequent degradation. Inhibits intracellular degradation of APOB via the autophagosome/lysosome pathway in a LDLR-independent manner. Involved in the disposal of non-acetylated intermediates of BACE1 in the early secretory pathway. Inhibits epithelial Na(+) channel (ENaC)-mediated Na(+) absorption by reducing ENaC surface expression primarily by increasing its proteasomal degradation. Regulates neuronal apoptosis via modulation of LRP8/APOER2 levels and related anti-apoptotic signaling pathways. This Mus musculus (Mouse) protein is Proprotein convertase subtilisin/kexin type 9 (Pcsk9).